The sequence spans 335 residues: Nuclear distribution protein nudE homolog 1 (335 aa).

A self-association region spans residues 1–93; sequence MEDSGKTFSS…VQHSEGYRQI (93 aa). The stretch at 18 to 188 forms a coiled coil; that stretch reads WKDLAMTYKQ…ELAVQQKQEK (171 aa). Residues 88-156 form an interaction with PAFAH1B1 region; it reads EGYRQISALE…ERNAFLESEL (69 aa). Residues 167–290 form an interaction with CENPF region; it reads QRLKDEARDL…QSPNRTGGPA (124 aa). Residues 181–246 are disordered; it reads AVQQKQEKPR…DDSTGGTPLT (66 aa). The span at 204–214 shows a compositional bias: polar residues; the sequence is TAVQATGSVPS. Residue Ser-211 is modified to Phosphoserine. Thr-215 and Thr-228 each carry phosphothreonine. Phosphoserine is present on residues Ser-231 and Ser-239. A phosphothreonine mark is found at Thr-243 and Thr-246. The S-palmitoyl cysteine; by ZDHHC2, ZDHHC3 and ZDHHC7 moiety is linked to residue Cys-274. Residues 279 to 335 form a disordered region; sequence YDQSPNRTGGPASGRSSKNRDGGERRPSSTSVPLGDKGLDTSCRWLSKSTTRSSSSC. A Phosphoserine modification is found at Ser-282. The span at 296–305 shows a compositional bias: basic and acidic residues; it reads KNRDGGERRP. The residue at position 309 (Ser-309) is a Phosphoserine. Over residues 325-335 the composition is skewed to low complexity; sequence SKSTTRSSSSC.

Belongs to the nudE family. As to quaternary structure, homodimer. Interacts with CNTRL, LIS1, dynein, SLMAP and TCP1. Interacts with CENPF, dynactin, tubulin gamma, PAFAH1B1, PCM1 and PCNT. Interacts with ZNF365. Interacts with GTP-bound RAB9A and RAB9B; the interaction leads to RAB9-dynein motor tethering. Interacts (via C-terminus) with MCRS1 (via C-terminus); phosphorylation of NDE1 inhibits the interaction. In terms of processing, phosphorylated in mitosis. Phosphorylated in vitro by CDC2. Phosphorylation at Thr-246 is essential for the G2/M transition. Expressed in the neuroepithelium throughout the developing brain, including the cerebral cortex and cerebellum.

The protein resides in the cytoplasm. The protein localises to the cytoskeleton. It localises to the microtubule organizing center. It is found in the centrosome. Its subcellular location is the chromosome. The protein resides in the centromere. The protein localises to the kinetochore. It localises to the spindle. It is found in the cleavage furrow. Its subcellular location is the cytoplasmic vesicle membrane. Required for centrosome duplication and formation and function of the mitotic spindle. Essential for the development of the cerebral cortex. May regulate the production of neurons by controlling the orientation of the mitotic spindle during division of cortical neuronal progenitors of the proliferative ventricular zone of the brain. Orientation of the division plane perpendicular to the layers of the cortex gives rise to two proliferative neuronal progenitors whereas parallel orientation of the division plane yields one proliferative neuronal progenitor and a postmitotic neuron. A premature shift towards a neuronal fate within the progenitor population may result in an overall reduction in the final number of neurons and an increase in the number of neurons in the deeper layers of the cortex. Acts as a RAB9A/B effector that tethers RAB9-associated late endosomes to the dynein motor for their retrograde transport to the trans-Golgi network. The chain is Nuclear distribution protein nudE homolog 1 from Homo sapiens (Human).